The sequence spans 1011 residues: Multiple C2 domain and transmembrane region protein 7 (1011 aa).

A C2 1 domain is found at 1–110 (MMMSNLKLGV…PHSDAVVLHF (110 aa)). Positions 178–195 (QEHQHQHPQGPNQSSSLA) are enriched in polar residues. Positions 178–201 (QEHQHQHPQGPNQSSSLAAEQDNH) are disordered. C2 domains lie at 261-381 (IHKD…PQWY), 421-546 (VDCS…ARWY), and 587-709 (YSSD…THSY). Aspartate 294, aspartate 300, aspartate 347, aspartate 349, and aspartate 354 together coordinate Ca(2+). 3 consecutive transmembrane segments (helical) span residues 812–832 (MMTV…ICSW), 846–866 (LMLV…MFLI), and 954–974 (IFVI…IQIV).

The protein belongs to the MCTP family. Requires Ca(2+) as cofactor. In terms of tissue distribution, accumulates specifically in hydathodes. Restricted the basal meristem of roots. Observed in flowers.

The protein resides in the membrane. It is found in the vesicle. It localises to the endosome membrane. Its function is as follows. May function as a signaling molecule by regulating the trafficking of other regulators. This chain is Multiple C2 domain and transmembrane region protein 7, found in Arabidopsis thaliana (Mouse-ear cress).